We begin with the raw amino-acid sequence, 275 residues long: MPLIKFKPTSPGRRSAARVVTPNIHKGSPHAALLESQSKTGGRNHHGRITVRHIGGGCKQRYRVIDFKRDKEAIPARVERIEYDPNRTAHIALLCYIDGERCYIIAPKGLKEGDKIISGPNVPIKLGNSLPLRNIPVGTTVHAVELKPRKGAQMARSAGSSVQLVAREGVYATLRLRSGEMRRVLAECRATIGEVGNEEHNLRKLGKAGAKRWLGVRPTVRGAAMNPVDHPHGGGEAKSGQGNPHPVTPWGVPTKGYKTRKNKRTQQFIIRGRRG.

The segment at 227–261 (PVDHPHGGGEAKSGQGNPHPVTPWGVPTKGYKTRK) is disordered.

The protein belongs to the universal ribosomal protein uL2 family. In terms of assembly, part of the 50S ribosomal subunit. Forms a bridge to the 30S subunit in the 70S ribosome.

In terms of biological role, one of the primary rRNA binding proteins. Required for association of the 30S and 50S subunits to form the 70S ribosome, for tRNA binding and peptide bond formation. It has been suggested to have peptidyltransferase activity; this is somewhat controversial. Makes several contacts with the 16S rRNA in the 70S ribosome. The polypeptide is Large ribosomal subunit protein uL2 (Xylella fastidiosa (strain M23)).